Consider the following 193-residue polypeptide: Potassium-transporting ATPase KdpC subunit (193 aa).

The helical transmembrane segment at P7–M27 threads the bilayer.

It belongs to the KdpC family. The system is composed of three essential subunits: KdpA, KdpB and KdpC.

The protein resides in the cell inner membrane. Its function is as follows. Part of the high-affinity ATP-driven potassium transport (or Kdp) system, which catalyzes the hydrolysis of ATP coupled with the electrogenic transport of potassium into the cytoplasm. This subunit acts as a catalytic chaperone that increases the ATP-binding affinity of the ATP-hydrolyzing subunit KdpB by the formation of a transient KdpB/KdpC/ATP ternary complex. This chain is Potassium-transporting ATPase KdpC subunit, found in Burkholderia vietnamiensis (strain G4 / LMG 22486) (Burkholderia cepacia (strain R1808)).